We begin with the raw amino-acid sequence, 347 residues long: GMP reductase (347 aa).

108-131 (ADFEKTKQILDLNPALNFVCIDVA) is a binding site for NADP(+). The K(+) site is built by glycine 181 and glycine 183. Cysteine 186 (thioimidate intermediate) is an active-site residue. Residue 216-239 (IISDGGCTTPGDVAKAFGGGADFV) participates in NADP(+) binding.

This sequence belongs to the IMPDH/GMPR family. GuaC type 1 subfamily. As to quaternary structure, homotetramer.

The catalysed reaction is IMP + NH4(+) + NADP(+) = GMP + NADPH + 2 H(+). In terms of biological role, catalyzes the irreversible NADPH-dependent deamination of GMP to IMP. It functions in the conversion of nucleobase, nucleoside and nucleotide derivatives of G to A nucleotides, and in maintaining the intracellular balance of A and G nucleotides. In Escherichia coli O157:H7, this protein is GMP reductase.